A 272-amino-acid chain; its full sequence is Cell division protein FtsQ (272 aa).

At 1–43 (MEYNPPNTRERIAARRQRLRQPSSEPAIPGWRRRFIDGLQSGR) the chain is on the cytoplasmic side. Residues 44-64 (IVSGAVFVVSCLALFYVLFSS) form a helical membrane-spanning segment. Residues 65 to 272 (QFRVQTVEVV…FYQNRTDGRS (208 aa)) lie on the Extracellular side of the membrane. The POTRA domain occupies 66–133 (FRVQTVEVVG…DRARIVIVER (68 aa)).

It belongs to the FtsQ/DivIB family. FtsQ subfamily.

The protein resides in the cell membrane. Essential cell division protein. The protein is Cell division protein FtsQ of Chloroflexus aggregans (strain MD-66 / DSM 9485).